We begin with the raw amino-acid sequence, 312 residues long: 2-dehydropantoate 2-reductase (312 aa).

Residues glycine 7–glycine 12, asparagine 105, and alanine 131 each bind NADP(+). Residue asparagine 105 coordinates substrate. The active-site Proton donor is the lysine 187. 3 residues coordinate substrate: asparagine 191, asparagine 195, and serine 260. Residue glutamate 273 coordinates NADP(+).

It belongs to the ketopantoate reductase family.

The protein localises to the cytoplasm. The catalysed reaction is (R)-pantoate + NADP(+) = 2-dehydropantoate + NADPH + H(+). It participates in cofactor biosynthesis; (R)-pantothenate biosynthesis; (R)-pantoate from 3-methyl-2-oxobutanoate: step 2/2. Functionally, catalyzes the NADPH-dependent reduction of ketopantoate into pantoic acid. This Lactococcus lactis subsp. lactis (strain IL1403) (Streptococcus lactis) protein is 2-dehydropantoate 2-reductase.